The primary structure comprises 98 residues: NADH-ubiquinone oxidoreductase chain 4L (98 aa).

A run of 3 helical transmembrane segments spans residues 1–21 (MPLI…GLLM), 29–49 (ALLC…LLAL), and 61–81 (IILL…LVMI).

This sequence belongs to the complex I subunit 4L family. As to quaternary structure, core subunit of respiratory chain NADH dehydrogenase (Complex I) which is composed of 45 different subunits.

The protein localises to the mitochondrion inner membrane. It catalyses the reaction a ubiquinone + NADH + 5 H(+)(in) = a ubiquinol + NAD(+) + 4 H(+)(out). Core subunit of the mitochondrial membrane respiratory chain NADH dehydrogenase (Complex I) which catalyzes electron transfer from NADH through the respiratory chain, using ubiquinone as an electron acceptor. Part of the enzyme membrane arm which is embedded in the lipid bilayer and involved in proton translocation. This Kogia breviceps (Pygmy sperm whale) protein is NADH-ubiquinone oxidoreductase chain 4L (MT-ND4L).